The sequence spans 551 residues: Protein PLASTID TRANSCRIPTIONALLY ACTIVE 12, chloroplastic (551 aa).

The N-terminal 47 residues, 1-47 (MASCSRTWLLPGMAPQATAQTVPRPLQSLKVFAGLPHRRRVLFSGVS), are a transit peptide targeting the chloroplast. Disordered stretches follow at residues 76–161 (SSYF…EGES) and 463–529 (HSYN…DQLS). The segment covering 109-119 (RVRAARAPAPV) has biased composition (low complexity). Acidic residues-rich tracts occupy residues 467–476 (EDSDDDEEDA) and 485–498 (SLEDDEDDGDDAED). Polar residues predominate over residues 505-516 (RNWSVLKTTGQA). The span at 518–529 (NPKEKSKKDQLS) shows a compositional bias: basic and acidic residues.

Component of the plastid-encoded plastid RNA polymerase (PEP) complex.

The protein localises to the plastid. It localises to the chloroplast. Its function is as follows. Required for the activity of the plastid-encoded RNA polymerase (PEP) and full expression of genes transcribed by PEP. Required for the proper build-up and formation of the PEP-complex. Binds single-stranded (ss) DNA and RNA, but not double-stranded (ds) DNA. The sequence is that of Protein PLASTID TRANSCRIPTIONALLY ACTIVE 12, chloroplastic from Oryza sativa subsp. japonica (Rice).